We begin with the raw amino-acid sequence, 326 residues long: Aspartate carbamoyltransferase catalytic subunit (326 aa).

Positions 58 and 59 each coordinate carbamoyl phosphate. Lys86 provides a ligand contact to L-aspartate. The carbamoyl phosphate site is built by Arg108, His141, and Gln144. L-aspartate contacts are provided by Arg181 and Arg239. The carbamoyl phosphate site is built by Gly280 and Pro281.

It belongs to the aspartate/ornithine carbamoyltransferase superfamily. ATCase family. In terms of assembly, heterododecamer (2C3:3R2) of six catalytic PyrB chains organized as two trimers (C3), and six regulatory PyrI chains organized as three dimers (R2).

It catalyses the reaction carbamoyl phosphate + L-aspartate = N-carbamoyl-L-aspartate + phosphate + H(+). It participates in pyrimidine metabolism; UMP biosynthesis via de novo pathway; (S)-dihydroorotate from bicarbonate: step 2/3. Its function is as follows. Catalyzes the condensation of carbamoyl phosphate and aspartate to form carbamoyl aspartate and inorganic phosphate, the committed step in the de novo pyrimidine nucleotide biosynthesis pathway. This chain is Aspartate carbamoyltransferase catalytic subunit, found in Synechococcus sp. (strain JA-2-3B'a(2-13)) (Cyanobacteria bacterium Yellowstone B-Prime).